Reading from the N-terminus, the 408-residue chain is Metacaspase-1B (408 aa).

The disordered stretch occupies residues 1–98; sequence MYHRHSAPPP…PPLEAQQFGN (98 aa). Pro residues-rich tracts occupy residues 24-49 and 56-66; these read WPPP…FPPP and SPYPTPPPHSP. Active-site residues include histidine 199 and cysteine 255.

The protein belongs to the peptidase C14B family.

Involved in cell death (apoptosis). Required for the apoptotic-like loss of membrane phospholipid asymmetry at stationary phase and facilitates growth under conditions of endoplasmic reticulum stress. The polypeptide is Metacaspase-1B (casB) (Aspergillus fumigatus (strain CBS 144.89 / FGSC A1163 / CEA10) (Neosartorya fumigata)).